Consider the following 363-residue polypeptide: Probable dual-specificity RNA methyltransferase RlmN (363 aa).

The active-site Proton acceptor is Glu106. One can recognise a Radical SAM core domain in the interval 112 to 345; sequence HEYGNSVCVT…VTIRREQGHD (234 aa). Residues Cys119 and Cys350 are joined by a disulfide bond. Cys126, Cys130, and Cys133 together coordinate [4Fe-4S] cluster. S-adenosyl-L-methionine-binding positions include 176–177, Ser208, 231–233, and Asn307; these read GE and SLH. Cys350 functions as the S-methylcysteine intermediate in the catalytic mechanism.

It belongs to the radical SAM superfamily. RlmN family. [4Fe-4S] cluster is required as a cofactor.

Its subcellular location is the cytoplasm. It catalyses the reaction adenosine(2503) in 23S rRNA + 2 reduced [2Fe-2S]-[ferredoxin] + 2 S-adenosyl-L-methionine = 2-methyladenosine(2503) in 23S rRNA + 5'-deoxyadenosine + L-methionine + 2 oxidized [2Fe-2S]-[ferredoxin] + S-adenosyl-L-homocysteine. The catalysed reaction is adenosine(37) in tRNA + 2 reduced [2Fe-2S]-[ferredoxin] + 2 S-adenosyl-L-methionine = 2-methyladenosine(37) in tRNA + 5'-deoxyadenosine + L-methionine + 2 oxidized [2Fe-2S]-[ferredoxin] + S-adenosyl-L-homocysteine. Specifically methylates position 2 of adenine 2503 in 23S rRNA and position 2 of adenine 37 in tRNAs. The protein is Probable dual-specificity RNA methyltransferase RlmN of Bacillus velezensis (strain DSM 23117 / BGSC 10A6 / LMG 26770 / FZB42) (Bacillus amyloliquefaciens subsp. plantarum).